A 569-amino-acid chain; its full sequence is Protein AF-9 (569 aa).

In terms of domain architecture, YEATS spans 1 to 138; that stretch reads MASSCAVQVK…EDFRRKLLKA (138 aa). Residues 138 to 476 form a disordered region; the sequence is AGGDPNRSIH…PPPPLLKTNN (339 aa). A compositionally biased stretch (low complexity) spans 149 to 190; the sequence is SSSSSSSSSSSSSSSSSSSSSSSSSSSSSSSSSSSSSSSSSS. Basic and acidic residues predominate over residues 202–265; sequence EHKEKPSKDS…PKPMSKEPKA (64 aa). Phosphoserine occurs at positions 289 and 295. Positions 296-301 match the Nuclear localization signal motif; the sequence is AKKRKK. The segment covering 304–314 has biased composition (low complexity); the sequence is SEALFKSFSSA. The span at 323–350 shows a compositional bias: basic and acidic residues; the sequence is ADKKQIKDKSHVKMGKVKIESETSEKKK. Residue K340 forms a Glycyl lysine isopeptide (Lys-Gly) (interchain with G-Cter in SUMO2) linkage. Acidic residues predominate over residues 358-369; sequence DIVDPNDSDVEE. Residues 372–396 are compositionally biased toward low complexity; the sequence is SSKSDSEQPSPASSSSSSSSSFTPS. Phosphoserine occurs at positions 413 and 420. Acidic residues predominate over residues 415-430; the sequence is DNEEESDEAEDNDNDS. Residues 446–462 are compositionally biased toward low complexity; sequence VSLSDGSDSESSSASSP. S484 carries the post-translational modification Phosphoserine.

As to quaternary structure, component of the super elongation complex (SEC), at least composed of EAF1, EAF2, CDK9, MLLT3/AF9, AFF (AFF1 or AFF4), the P-TEFb complex and ELL (ELL, ELL2 or ELL3). Interacts with BCOR. Interacts with CBX8. Interacts with ALKBH4. In terms of tissue distribution, ubiquitously expressed. Strong expression in the spleen.

The protein resides in the nucleus. It is found in the chromosome. In terms of biological role, chromatin reader component of the super elongation complex (SEC), a complex required to increase the catalytic rate of RNA polymerase II transcription by suppressing transient pausing by the polymerase at multiple sites along the DNA. Specifically recognizes and binds acylated histone H3, with a preference for histone H3 that is crotonylated. Crotonylation marks active promoters and enhancers and confers resistance to transcriptional repressors. Recognizes and binds histone H3 crotonylated at 'Lys-9' (H3K9cr), and with slightly lower affinity histone H3 crotonylated at 'Lys-18' (H3K18cr). Also recognizes and binds histone H3 acetylated and butyrylated at 'Lys-9' (H3K9ac and H3K9bu, respectively), but with lower affinity than crotonylated histone H3. In the SEC complex, MLLT3 is required to recruit the complex to crotonylated histones. Recruitment of the SEC complex to crotonylated histones promotes recruitment of DOT1L on active chromatin to deposit histone H3 'Lys-79' methylation (H3K79me). Plays a key role in hematopoietic stem cell (HSC) maintenance by preserving, rather than conferring, HSC stemness. Acts by binding to the transcription start site of active genes in HSCs and sustaining level of H3K79me2, probably by recruiting DOT1L. This Mus musculus (Mouse) protein is Protein AF-9 (Mllt3).